Here is a 394-residue protein sequence, read N- to C-terminus: Flagellin A (394 aa).

It belongs to the bacterial flagellin family.

It localises to the secreted. It is found in the bacterial flagellum. Functionally, flagellin is the subunit protein which polymerizes to form the filaments of bacterial flagella. Homomer of FlaA is able to form a functional filament. This chain is Flagellin A (flaA), found in Rhizobium meliloti (strain 1021) (Ensifer meliloti).